The chain runs to 154 residues: Xanthine-guanine phosphoribosyltransferase (154 aa).

5-phospho-alpha-D-ribose 1-diphosphate contacts are provided by residues 37–38 (RG) and 90–98 (DDLVDTGNT). Asp91 is a binding site for Mg(2+). Guanine-binding residues include Asp94 and Ile137. Positions 94 and 137 each coordinate xanthine. GMP is bound by residues 94-98 (DTGNT) and 136-137 (WI).

Belongs to the purine/pyrimidine phosphoribosyltransferase family. XGPT subfamily. In terms of assembly, homotetramer. It depends on Mg(2+) as a cofactor.

The protein localises to the cell inner membrane. The enzyme catalyses GMP + diphosphate = guanine + 5-phospho-alpha-D-ribose 1-diphosphate. It carries out the reaction XMP + diphosphate = xanthine + 5-phospho-alpha-D-ribose 1-diphosphate. The catalysed reaction is IMP + diphosphate = hypoxanthine + 5-phospho-alpha-D-ribose 1-diphosphate. It participates in purine metabolism; GMP biosynthesis via salvage pathway; GMP from guanine: step 1/1. Its pathway is purine metabolism; XMP biosynthesis via salvage pathway; XMP from xanthine: step 1/1. In terms of biological role, purine salvage pathway enzyme that catalyzes the transfer of the ribosyl-5-phosphate group from 5-phospho-alpha-D-ribose 1-diphosphate (PRPP) to the N9 position of the 6-oxopurines guanine and xanthine to form the corresponding ribonucleotides GMP (guanosine 5'-monophosphate) and XMP (xanthosine 5'-monophosphate), with the release of PPi. To a lesser extent, also acts on hypoxanthine. The protein is Xanthine-guanine phosphoribosyltransferase of Histophilus somni (strain 129Pt) (Haemophilus somnus).